Consider the following 389-residue polypeptide: Large envelope protein (389 aa).

N-acetylmethionine is present on methionine 1. The N-myristoyl glycine; by host moiety is linked to residue glycine 2. The segment at 2–108 (GTNLSVPNPL…PPLRDTHPQA (107 aa)) is pre-S1. The interval 2–163 (GTNLSVPNPL…LSTTGDPVPN (162 aa)) is pre-S. The Virion surface; in external conformation portion of the chain corresponds to 2-170 (GTNLSVPNPL…VPNMENIASG (169 aa)). Over 2–242 (GTNLSVPNPL…PGYRWMCLRR (241 aa)) the chain is Intravirion; in internal conformation. Residues 109–163 (MQWNSTTFHQTLQDPRVRALYFPAGGSSSGTVNPVQNTASSISSILSTTGDPVPN) are pre-S2. A helical transmembrane segment spans residues 171–191 (LLGPLLVLQAGFFSLTKILTI). Residues 192–242 (PLSLDSWWTSLNFLGETPVCLGQNSQSQISSHSPTCCPPICPGYRWMCLRR) are Intravirion; in external conformation-facing. Residues 243–263 (FIIFLCILLLCLIFLLVLLDY) traverse the membrane as a helical segment. Topologically, residues 264–337 (QGMLPVCPLI…WASVRFSWLS (74 aa)) are virion surface. Residue asparagine 309 is glycosylated (N-linked (GlcNAc...) asparagine; by host). A helical membrane pass occupies residues 338–358 (LLVPFVQWFVGLSPTVWLSVI). At 359–364 (WMMWFW) the chain is on the intravirion side. Residues 365–387 (GPSLYNILSPFMPLLPIFFCLWV) form a helical membrane-spanning segment. The Virion surface portion of the chain corresponds to 388–389 (YI).

It belongs to the orthohepadnavirus major surface antigen family. In terms of assembly, interacts (via its myristoylated pre-S1 region) with the host SLC10A1/NTCP; this interaction is essential for viral entry. In its internal form (Li-HBsAg), interacts with the capsid protein and with the isoform S. Interacts with host chaperone CANX. As to quaternary structure, associates with host chaperone CANX through its pre-S2 N glycan; this association may be essential for isoform M proper secretion. In terms of assembly, interacts with isoform L. Interacts with the antigens of satellite virus HDV (HDVAgs); this interaction is required for encapsidation of HDV genomic RNA. Isoform M is N-terminally acetylated by host at a ratio of 90%, and N-glycosylated by host at the pre-S2 region. In terms of processing, myristoylated; this modification is essential for its interaction with the host protein SLC10A1/NTCP.

It localises to the virion membrane. Functionally, the large envelope protein exists in two topological conformations, one which is termed 'external' or Le-HBsAg and the other 'internal' or Li-HBsAg. In its external conformation the protein attaches the virus to cell receptors and thereby initiating infection. This interaction determines the species specificity and liver tropism. This attachment induces virion internalization predominantly through caveolin-mediated endocytosis. The large envelope protein also assures fusion between virion membrane and endosomal membrane. In its internal conformation the protein plays a role in virion morphogenesis and mediates the contact with the nucleocapsid like a matrix protein. Its function is as follows. The middle envelope protein plays an important role in the budding of the virion. It is involved in the induction of budding in a nucleocapsid independent way. In this process the majority of envelope proteins bud to form subviral lipoprotein particles of 22 nm of diameter that do not contain a nucleocapsid. In Hepatitis B virus genotype B2 (isolate Indonesia/pIDW420/1988) (HBV-B), this protein is Large envelope protein.